A 460-amino-acid polypeptide reads, in one-letter code: MSQTSSNPATLRLPFKEKLAYGLGDLGSNILLDIGTLYLLKFYTDVLGLPGTYGGIIFLIAKFFTAFTDMGTGIMLDSRRKIGPKGKFRPFVLYAAFPVTLLAIANFVGTPFEVTGKTVVATMLFMLYGLVFSMMNCSYGAMVPAITKNPDERASLAAWRQGGATLGLLLCTVGFVPVMNLIEGNAQLSYIFAATLFSLFGLLFMWLCYAGVKERYVEVKPVDSAQKPGLLQSFRAIAGNRPLFILCIANLCTLGAFNVKLAIQVYYTQYVLNDPILLSWMGFFSMGCIFIGVFLMPGAVRRFGKKKVYIGGLLIWVAGDLLNYFFGGGSVSFVAFSCLAFFGSAFVNSLNWALVSDTVEYGEWRTGVRSEGTVYTGFTFFRKVSQALAGFFPGWMLTQIGYIPNVVQSAGTVEGLRQLIFIYPCVLAVITIIAMGCFYNLNEKMYVRIVEEIEARKHTV.

Over 1 to 18 (MSQTSSNPATLRLPFKEK) the chain is Cytoplasmic. The helical transmembrane segment at 19–39 (LAYGLGDLGSNILLDIGTLYL) threads the bilayer. Residues 40 to 46 (LKFYTDV) are Periplasmic-facing. A helical membrane pass occupies residues 47-67 (LGLPGTYGGIIFLIAKFFTAF). The Cytoplasmic portion of the chain corresponds to 68 to 91 (TDMGTGIMLDSRRKIGPKGKFRPF). A helical membrane pass occupies residues 92 to 112 (VLYAAFPVTLLAIANFVGTPF). The Periplasmic portion of the chain corresponds to 113–122 (EVTGKTVVAT). Residues 123-143 (MLFMLYGLVFSMMNCSYGAMV) form a helical membrane-spanning segment. Over 144 to 161 (PAITKNPDERASLAAWRQ) the chain is Cytoplasmic. The chain crosses the membrane as a helical span at residues 162–182 (GGATLGLLLCTVGFVPVMNLI). Over 183–190 (EGNAQLSY) the chain is Periplasmic. Residues 191 to 211 (IFAATLFSLFGLLFMWLCYAG) form a helical membrane-spanning segment. The Cytoplasmic portion of the chain corresponds to 212 to 242 (VKERYVEVKPVDSAQKPGLLQSFRAIAGNRP). The helical transmembrane segment at 243-263 (LFILCIANLCTLGAFNVKLAI) threads the bilayer. The Periplasmic portion of the chain corresponds to 264–275 (QVYYTQYVLNDP). The helical transmembrane segment at 276 to 296 (ILLSWMGFFSMGCIFIGVFLM) threads the bilayer. Residues 297–307 (PGAVRRFGKKK) lie on the Cytoplasmic side of the membrane. A helical transmembrane segment spans residues 308-328 (VYIGGLLIWVAGDLLNYFFGG). A topological domain (periplasmic) is located at residue G329. A helical transmembrane segment spans residues 330–350 (SVSFVAFSCLAFFGSAFVNSL). Residues 351 to 386 (NWALVSDTVEYGEWRTGVRSEGTVYTGFTFFRKVSQ) lie on the Cytoplasmic side of the membrane. A helical transmembrane segment spans residues 387-407 (ALAGFFPGWMLTQIGYIPNVV). Residues 408 to 418 (QSAGTVEGLRQ) lie on the Periplasmic side of the membrane. Residues 419–439 (LIFIYPCVLAVITIIAMGCFY) form a helical membrane-spanning segment. At 440–460 (NLNEKMYVRIVEEIEARKHTV) the chain is on the cytoplasmic side.

This sequence belongs to the sodium:galactoside symporter (TC 2.A.2) family.

Its subcellular location is the cell inner membrane. Its function is as follows. Could be involved in the export of 2,3-dihydroxypropane-1-sulfonate (DHPS). The sequence is that of Putative 2,3-dihydroxypropane-1-sulfonate exporter (yihP) from Salmonella typhimurium (strain LT2 / SGSC1412 / ATCC 700720).